The chain runs to 427 residues: Trigger factor (427 aa).

The 81-residue stretch at 160 to 240 (TDTVIGDVVK…VKEVKRLELP (81 aa)) folds into the PPIase FKBP-type domain.

The protein belongs to the FKBP-type PPIase family. Tig subfamily.

The protein resides in the cytoplasm. The enzyme catalyses [protein]-peptidylproline (omega=180) = [protein]-peptidylproline (omega=0). Functionally, involved in protein export. Acts as a chaperone by maintaining the newly synthesized protein in an open conformation. Functions as a peptidyl-prolyl cis-trans isomerase. The sequence is that of Trigger factor from Chlorobium limicola (strain DSM 245 / NBRC 103803 / 6330).